A 436-amino-acid polypeptide reads, in one-letter code: Hydrogenobyrinate a,c-diamide synthase (436 aa).

The 192-residue stretch at 244 to 435 folds into the GATase cobBQ-type domain; sequence HIAVARDDAF…MHVIDFCGEK (192 aa). C327 acts as the Nucleophile in catalysis.

This sequence belongs to the CobB/CbiA family. It depends on Mg(2+) as a cofactor.

It catalyses the reaction hydrogenobyrinate + 2 L-glutamine + 2 ATP + 2 H2O = hydrogenobyrinate a,c-diamide + 2 L-glutamate + 2 ADP + 2 phosphate + 2 H(+). The protein operates within cofactor biosynthesis; adenosylcobalamin biosynthesis; cob(II)yrinate a,c-diamide from precorrin-2 (aerobic route): step 9/10. Functionally, catalyzes the ATP-dependent amidation of the two carboxylate groups at positions a and c of hydrogenobyrinate, using either L-glutamine or ammonia as the nitrogen source. This Brucella anthropi (strain ATCC 49188 / DSM 6882 / CCUG 24695 / JCM 21032 / LMG 3331 / NBRC 15819 / NCTC 12168 / Alc 37) (Ochrobactrum anthropi) protein is Hydrogenobyrinate a,c-diamide synthase.